The chain runs to 520 residues: L-tyrosine:2-oxoglutarate aminotransferase amt1 (520 aa).

This sequence belongs to the class-I pyridoxal-phosphate-dependent aminotransferase family. Requires pyridoxal 5'-phosphate as cofactor.

The enzyme catalyses L-tyrosine + 2-oxoglutarate = 3-(4-hydroxyphenyl)pyruvate + L-glutamate. The protein operates within secondary metabolite biosynthesis. An L-tyrosine:2-oxoglutarate aminotransferase (probably amt1) and atromentin synthetase nps3 catalyze consecutive steps to turn over L-tyrosine into atromentin, which represents the generic precursor molecule for the entire terphenylquinone and pulvinic acid family of pigments, which are widely distributed secondary metabolites in homobasidiomycetes. The first step catalyzed by amt1 converts L-tyrosine in to 4-hydroxyphenylpyruvate (4-HPP). Adenylation of two 4-HPP monomers by the nps3 adenylation (A) domain, covalent tethering of the monomers as a thioester and oxoester onto the nps3 thiolation (T) and thioesterase (TE) domains, respectively, and symmetric C-C-bond formation between two monomers catalyzed by the nps3 TE domain leads to atromentin. Follow-up products of atromentin in S.lacrymans include atromentic acid, xerocomic acid, isoxerocomic acid and variegatic acid. The sequence is that of L-tyrosine:2-oxoglutarate aminotransferase amt1 (amt1) from Serpula lacrymans var. lacrymans (strain S7.9) (Dry rot fungus).